Reading from the N-terminus, the 294-residue chain is Decaprenyl-diphosphate synthase subunit 2 (294 aa).

This sequence belongs to the FPP/GGPP synthase family. In terms of assembly, heterotetramer of 2 dps1 and 2 dlp1 subunits.

It is found in the mitochondrion. The catalysed reaction is 7 isopentenyl diphosphate + (2E,6E)-farnesyl diphosphate = all-trans-decaprenyl diphosphate + 7 diphosphate. It participates in cofactor biosynthesis; ubiquinone biosynthesis. In terms of biological role, supplies decaprenyl diphosphate, the precursor for the side chain of the isoprenoid quinones ubiquinone-10. The sequence is that of Decaprenyl-diphosphate synthase subunit 2 (dlp1) from Schizosaccharomyces pombe (strain 972 / ATCC 24843) (Fission yeast).